Consider the following 36-residue polypeptide: Kappa-actitoxin-Avd6a (36 aa).

Positions 2–36 constitute a ShKT domain; that stretch reads CKDNFAAATCKHVKENKNCGSQKYATNCAKTCGKC. Cystine bridges form between cysteine 2/cysteine 36, cysteine 11/cysteine 29, and cysteine 20/cysteine 33. The tract at residues 24–25 is crucial for binding to potassium channels; sequence KY.

This sequence belongs to the sea anemone type 1 potassium channel toxin family. Type 1b subfamily.

The protein localises to the secreted. It is found in the nematocyst. In terms of biological role, blocks voltage-gated potassium channels Kv1.2/KCNA2 (IC(50)=140 nM). In Anemonia sulcata (Mediterranean snakelocks sea anemone), this protein is Kappa-actitoxin-Avd6a.